Reading from the N-terminus, the 232-residue chain is MLEAKSAALLEDTIDYVFDNQALLLEALTHKSFSNEQNDRTEPDNERLEFLGDAVLGVVVSHYIFRTFPHLPEGELTRIRSEVVSEKGLTVIGKAICLGDYMRLGKGEERSGGRQKSSLLANTMEALLGAVFCDGGFDSVRRVIEALFIPHIQRAARRKTGVDYKTRLQERLQARFGDVPQYVLIHADGPPHQRSYSVEAHFRGSCIGQGQGRSKKSAEQAAAKQALEYLEE.

An RNase III domain is found at 7 to 136 (AALLEDTIDY…LLGAVFCDGG (130 aa)). Glu-49 contacts Mg(2+). Residue Asp-53 is part of the active site. Positions 122 and 125 each coordinate Mg(2+). Glu-125 is a catalytic residue. One can recognise a DRBM domain in the interval 163–232 (DYKTRLQERL…AKQALEYLEE (70 aa)).

Belongs to the ribonuclease III family. Homodimer. The cofactor is Mg(2+).

It localises to the cytoplasm. It catalyses the reaction Endonucleolytic cleavage to 5'-phosphomonoester.. Digests double-stranded RNA. Involved in the processing of primary rRNA transcript to yield the immediate precursors to the large and small rRNAs (23S and 16S). Processes some mRNAs, and tRNAs when they are encoded in the rRNA operon. Processes pre-crRNA and tracrRNA of type II CRISPR loci if present in the organism. This Syntrophotalea carbinolica (strain DSM 2380 / NBRC 103641 / GraBd1) (Pelobacter carbinolicus) protein is Ribonuclease 3.